Reading from the N-terminus, the 215-residue chain is Putative serine/threonine-protein kinase YrzF (215 aa).

Residues 27-215 form the Protein kinase domain; sequence SEELTLIGKG…HFAQRKRKYS (189 aa). ATP-binding positions include 33–41 and lysine 54; that span reads IGKGRSAYV. The active-site Proton acceptor is aspartate 135.

This sequence belongs to the protein kinase superfamily. Ser/Thr protein kinase family.

It carries out the reaction L-seryl-[protein] + ATP = O-phospho-L-seryl-[protein] + ADP + H(+). The enzyme catalyses L-threonyl-[protein] + ATP = O-phospho-L-threonyl-[protein] + ADP + H(+). This is Putative serine/threonine-protein kinase YrzF (yrzF) from Bacillus subtilis (strain 168).